A 351-amino-acid polypeptide reads, in one-letter code: C(7)-cyclitol 7-kinase (351 aa).

Belongs to the ROK (NagC/XylR) family.

The catalysed reaction is valienone + ATP = valienone 7-phosphate + ADP + H(+). It catalyses the reaction validone + ATP = validone 7-phosphate + ADP + H(+). Involved in the biosynthesis of the antifungal agent validamycin A. Catalyzes the phosphorylation of valienone and validone to their 7-phosphate derivatives. The sequence is that of C(7)-cyclitol 7-kinase from Streptomyces hygroscopicus subsp. limoneus.